Consider the following 375-residue polypeptide: Kininogen (375 aa).

An N-terminal signal peptide occupies residues 1–23; sequence MKLGVRLCVLVVFSLQLWGPGQG. Cystatin kininogen-type domains lie at 35–139 and 156–260; these read CDDK…VEAP and VESE…GPLD. N74 is a glycosylation site (N-linked (GlcNAc) asparagine). Cystine bridges form between C91–C102, C115–C133, C211–C223, and C234–C254. N235 is a glycosylation site (N-linked (GlcNAc) asparagine). Positions 283 to 375 are disordered; it reads EVKTTQASTA…LSDLDLLGKK (93 aa).

In terms of processing, N-glycosylated, with sialylated biantennary complex-type glycans. Post-translationally, O-glycosylated, sialylated oligosaccharides. Bradykinin is released from kininogen by kallikrein. In terms of processing, the N-terminus is blocked. Expressed in the skin, liver, intestine, spleen, pancreas and kidney.

The protein resides in the cytoplasm. The protein localises to the vacuole. Functionally, inhibits papain and ficin (cysteine proteinases) but not trypsin (a serine proteinase). This Salmo salar (Atlantic salmon) protein is Kininogen (LOC106584303).